The sequence spans 191 residues: Protein Ves (191 aa).

Belongs to the Ves family.

This chain is Protein Ves, found in Escherichia coli O8 (strain IAI1).